We begin with the raw amino-acid sequence, 232 residues long: Anti-sigma-K factor RskA (232 aa).

Residues 1 to 91 (MTEPTDFQLL…QSRRQPRWRT (91 aa)) lie on the Cytoplasmic side of the membrane. A helical membrane pass occupies residues 92–112 (AVFASAAAIAVGLGAFGLGVL). Topologically, residues 113–232 (TRPSASPTVA…GTVLAELPLR (120 aa)) are extracellular.

Belongs to the anti-sigma-K factor family.

Its subcellular location is the cell membrane. An anti-sigma factor for extracytoplasmic function (ECF) sigma factor SigK. ECF sigma factors are held in an inactive form by an anti-sigma factor until released by regulated intramembrane proteolysis (RIP). RIP occurs when an extracytoplasmic signal triggers a concerted proteolytic cascade to transmit information and elicit cellular responses. The membrane-spanning regulatory substrate protein is first cut extracytoplasmically (site-1 protease, S1P), then within the membrane itself (site-2 protease, S2P, Rip1), while cytoplasmic proteases finish degrading the regulatory protein, liberating the sigma factor. The protein is Anti-sigma-K factor RskA (rskA) of Mycobacterium ulcerans (strain Agy99).